Here is a 156-residue protein sequence, read N- to C-terminus: ATP synthase subunit b (156 aa).

The helical transmembrane segment at 7–27 threads the bilayer; that stretch reads LFAQLVVFFILAWFTMKFVWP.

This sequence belongs to the ATPase B chain family. As to quaternary structure, F-type ATPases have 2 components, F(1) - the catalytic core - and F(0) - the membrane proton channel. F(1) has five subunits: alpha(3), beta(3), gamma(1), delta(1), epsilon(1). F(0) has four main subunits: a(1), b(2) and c(10-14). The alpha and beta chains form an alternating ring which encloses part of the gamma chain. F(1) is attached to F(0) by a central stalk formed by the gamma and epsilon chains, while a peripheral stalk is formed by the delta and b chains.

The protein resides in the cell inner membrane. Its function is as follows. F(1)F(0) ATP synthase produces ATP from ADP in the presence of a proton or sodium gradient. F-type ATPases consist of two structural domains, F(1) containing the extramembraneous catalytic core and F(0) containing the membrane proton channel, linked together by a central stalk and a peripheral stalk. During catalysis, ATP synthesis in the catalytic domain of F(1) is coupled via a rotary mechanism of the central stalk subunits to proton translocation. In terms of biological role, component of the F(0) channel, it forms part of the peripheral stalk, linking F(1) to F(0). This chain is ATP synthase subunit b, found in Methylibium petroleiphilum (strain ATCC BAA-1232 / LMG 22953 / PM1).